We begin with the raw amino-acid sequence, 289 residues long: dTDP-rhamnosyl transferase RfbG (289 aa).

The protein belongs to the glycosyltransferase 2 family.

Its pathway is bacterial outer membrane biogenesis; lipopolysaccharide biosynthesis. The polypeptide is dTDP-rhamnosyl transferase RfbG (rfbG) (Shigella flexneri).